We begin with the raw amino-acid sequence, 608 residues long: Lysophospholipase 2 (608 aa).

The N-terminal stretch at 1–17 (MLVWQSILLFLVGCVLS) is a signal peptide. Positions 30 to 564 (QCPEGKLTRS…ENYCWDGTIY (535 aa)) constitute a PLA2c domain. N-linked (GlcNAc...) asparagine glycans are attached at residues Asn259, Asn365, Asn450, Asn464, Asn491, and Asn572.

This sequence belongs to the lysophospholipase family.

It localises to the secreted. The catalysed reaction is a 1-acyl-sn-glycero-3-phosphocholine + H2O = sn-glycerol 3-phosphocholine + a fatty acid + H(+). Its function is as follows. Catalyzes the release of fatty acids from lysophospholipids. Phospholipase B may well contribute to pathogenicity by abetting the fungus in damaging and traversing host cell membranes, processes which likely increase the rapidity of disseminated infection. This chain is Lysophospholipase 2 (PLB2), found in Candida albicans (Yeast).